The sequence spans 373 residues: Alginate lyase (373 aa).

The N-terminal stretch at 1 to 25 (MRLPMQKLLIPTLLGLAMFAGSVNA) is a signal peptide. Substrate is bound by residues 66–67 (SK), 139–140 (HT), and Tyr257.

It belongs to the polysaccharide lyase 5 family.

It is found in the periplasm. It catalyses the reaction Eliminative cleavage of alginate to give oligosaccharides with 4-deoxy-alpha-L-erythro-hex-4-enuronosyl groups at their non-reducing ends and beta-D-mannuronate at their reducing end.. Functionally, catalyzes the depolymerization of alginate by cleaving the beta-1,4 glycosidic bond between two adjacent sugar residues via a beta-elimination mechanism. May serve to degrade mislocalized alginate that is trapped in the periplasmic space. In Pseudomonas fluorescens, this protein is Alginate lyase.